Consider the following 134-residue polypeptide: Large ribosomal subunit protein bL21 (134 aa).

Belongs to the bacterial ribosomal protein bL21 family. As to quaternary structure, part of the 50S ribosomal subunit. Contacts protein L20.

Functionally, this protein binds to 23S rRNA in the presence of protein L20. This chain is Large ribosomal subunit protein bL21, found in Pelagibacter ubique (strain HTCC1062).